The chain runs to 801 residues: MWTSGRMSNAKNWLGLGMSLYFWGLMDLTTTVLSDTPTPQGELEALLSDKPQSHQRTKRSWVWNQFFVLEEYTGTDPLYVGKLHSDMDRGDGSIKYILSGEGAGIVFTIDDTTGDIHAIQRLDREERAQYTLRAQALDRRTGRPMEPESEFIIKIQDINDNEPKFLDGPYVATVPEMSPVGTSVIQVTATDADDPTYGNSARVVYSILQGQPYFSVDSKTGVIRTALMNMDREAKEYYEVIIQAKDMGGQLGGLAGTTTVNITLSDVNDNPPRFPQKHYQMSVLESAPISSTVGRVFAKDLDEGINAEMKYTIVDGDGADAFDISTDPNFQVGIITVKKPLSFESKKSYTLKVEGANPHLEMRFLNLGPFQDTTTVHISVEDVDEPPVFEPGFYFVEVPEDVAIGTTIQIISAKDPDVTNNSIRYSIDRSSDPGRFFYVDITTGALMTARPLDREEFSWHNITVLAMEMNNPSQVGSVPVTIKVLDVNDNAPEFPRFYEAFVCENAKAGQLIQTVSAVDQDDPRNGQHFYYSLAPEAANNPNFTIRDNQDNTARILTRRSGFRQQEQSVFHLPILIADSGQPVLSSTGTLTIQVCSCDDDGHVMSCSPEAYMLPVSLSRGALIAILACIFVLLVLVLLILSMRRHRKQPYIIDDEENIHENIVRYDDEGGGEEDTEAFDIAAMWNPREAQAGAAPKTRQDMLPEIESLSRYVPQTCAVNSTVHSYVLAKLYEADMDLWAPPFDSLQTYMFEGDGSVAGSLSSLQSATSDSEQSFDFLTDWGPRFRKLAELYGASEGPAPLW.

An N-terminal signal peptide occupies residues 1-34; the sequence is MWTSGRMSNAKNWLGLGMSLYFWGLMDLTTTVLS. Positions 35-59 are excised as a propeptide; the sequence is DTPTPQGELEALLSDKPQSHQRTKR. Residues 60 to 619 lie on the Extracellular side of the membrane; sequence SWVWNQFFVL…AYMLPVSLSR (560 aa). Cadherin domains follow at residues 61–165, 166–274, 275–389, 390–494, and 494–610; these read WVWN…EPKF, LDGP…PPRF, PQKH…PPVF, EPGF…APEF, and FPRF…SPEA. N-linked (GlcNAc...) asparagine glycosylation is present at Asn261. 3 N-linked (GlcNAc...) asparagine glycosylation sites follow: Asn420, Asn461, and Asn542. A helical membrane pass occupies residues 620–640; sequence GALIAILACIFVLLVLVLLIL. Topologically, residues 641 to 801 are cytoplasmic; sequence SMRRHRKQPY…GASEGPAPLW (161 aa).

Expressed in placenta, adult brain, and fetal brain.

The protein localises to the cell membrane. In terms of biological role, cadherins are calcium-dependent cell adhesion proteins. They preferentially interact with themselves in a homophilic manner in connecting cells; cadherins may thus contribute to the sorting of heterogeneous cell types. The polypeptide is Cadherin-20 (CDH20) (Homo sapiens (Human)).